The sequence spans 253 residues: Uroplakin-3b-like protein 1 (253 aa).

The signal sequence occupies residues 1 to 26; that stretch reads MGLGRGQSPLLMALLLLLACLQMGMS. Topologically, residues 27–194 are extracellular; the sequence is LERISYVPQL…PGPQTAGTVV (168 aa). N-linked (GlcNAc...) asparagine glycosylation is found at asparagine 78 and asparagine 130. Residues 195–215 traverse the membrane as a helical segment; that stretch reads IIAILSVLLAVLLAALLALLI. Residues 216–253 lie on the Cytoplasmic side of the membrane; it reads FTWYDTCGSTPISGPGELVFVRKYDTHHMSRPSTVGGS.

Belongs to the uroplakin-3 family.

The protein resides in the membrane. In Bos taurus (Bovine), this protein is Uroplakin-3b-like protein 1.